Here is a 503-residue protein sequence, read N- to C-terminus: Maturase K (503 aa).

Belongs to the intron maturase 2 family. MatK subfamily.

Its subcellular location is the plastid. It is found in the chloroplast. Usually encoded in the trnK tRNA gene intron. Probably assists in splicing its own and other chloroplast group II introns. This is Maturase K from Thryptomene saxicola (Rock thryptomene).